Consider the following 135-residue polypeptide: Photosystem II extrinsic protein U (135 aa).

Residues 1-29 (MKRLLSWLTGALVMASLMAGLVMPSSVYA) form the signal peptide.

The protein belongs to the PsbU family. PSII is composed of 1 copy each of membrane proteins PsbA, PsbB, PsbC, PsbD, PsbE, PsbF, PsbH, PsbI, PsbJ, PsbK, PsbL, PsbM, PsbT, PsbX, PsbY, PsbZ, Psb30/Ycf12, peripheral proteins PsbO, CyanoQ (PsbQ), PsbU, PsbV and a large number of cofactors. It forms dimeric complexes.

It is found in the cellular thylakoid membrane. One of the extrinsic, lumenal subunits of photosystem II (PSII). PSII is a light-driven water plastoquinone oxidoreductase, using light energy to abstract electrons from H(2)O, generating a proton gradient subsequently used for ATP formation. The extrinsic proteins stabilize the structure of photosystem II oxygen-evolving complex (OEC), the ion environment of oxygen evolution and protect the OEC against heat-induced inactivation. The sequence is that of Photosystem II extrinsic protein U from Synechococcus sp. (strain CC9605).